The sequence spans 937 residues: Molybdenum cofactor sulfurase (937 aa).

Lys237 bears the N6-(pyridoxal phosphate)lysine mark. The active site involves Cys397. Disordered regions lie at residues 633–710, 756–795, and 897–921; these read GQGK…RRIL, PSPS…KLNP, and KEGT…GGNG. The span at 638-652 shows a compositional bias: basic residues; the sequence is MTRHAKAHLQRHQHQ. The MOSC domain occupies 682–935; sequence TPPSPPDSDT…VRVGDVVRPS (254 aa). The segment covering 756 to 767 has biased composition (low complexity); sequence PSPSTPSASPSN. The span at 900-921 shows a compositional bias: gly residues; the sequence is TGMGMGTGTGTGTGTRSMGGNG.

This sequence belongs to the class-V pyridoxal-phosphate-dependent aminotransferase family. MOCOS subfamily. The cofactor is pyridoxal 5'-phosphate.

The catalysed reaction is Mo-molybdopterin + L-cysteine + AH2 = thio-Mo-molybdopterin + L-alanine + A + H2O. It functions in the pathway cofactor biosynthesis; molybdopterin biosynthesis. Functionally, sulfurates the molybdenum cofactor. Sulfation of molybdenum is essential for xanthine dehydrogenase (XDH) and aldehyde oxidase (ADO) enzymes in which molybdenum cofactor is liganded by 1 oxygen and 1 sulfur atom in active form. In Neurospora crassa (strain ATCC 24698 / 74-OR23-1A / CBS 708.71 / DSM 1257 / FGSC 987), this protein is Molybdenum cofactor sulfurase (nit-13).